Here is a 518-residue protein sequence, read N- to C-terminus: Membrane-bound lytic murein transglycosylase F (518 aa).

The N-terminal stretch at Met1–Ala21 is a signal peptide. Residues Leu22–Gly269 are non-LT domain. An LT domain region spans residues Asp270–Asn518. Glu314 is an active-site residue.

In the N-terminal section; belongs to the bacterial solute-binding protein 3 family. It in the C-terminal section; belongs to the transglycosylase Slt family.

Its subcellular location is the cell outer membrane. It catalyses the reaction Exolytic cleavage of the (1-&gt;4)-beta-glycosidic linkage between N-acetylmuramic acid (MurNAc) and N-acetylglucosamine (GlcNAc) residues in peptidoglycan, from either the reducing or the non-reducing ends of the peptidoglycan chains, with concomitant formation of a 1,6-anhydrobond in the MurNAc residue.. Functionally, murein-degrading enzyme that degrades murein glycan strands and insoluble, high-molecular weight murein sacculi, with the concomitant formation of a 1,6-anhydromuramoyl product. Lytic transglycosylases (LTs) play an integral role in the metabolism of the peptidoglycan (PG) sacculus. Their lytic action creates space within the PG sacculus to allow for its expansion as well as for the insertion of various structures such as secretion systems and flagella. In Escherichia coli (strain ATCC 8739 / DSM 1576 / NBRC 3972 / NCIMB 8545 / WDCM 00012 / Crooks), this protein is Membrane-bound lytic murein transglycosylase F.